A 313-amino-acid chain; its full sequence is Protein PALE CRESS, chloroplastic (313 aa).

The transit peptide at 1–22 (MAATSLVLTCASPLFSSPRVIS) directs the protein to the chloroplast.

As to expression, expressed in green tissues, including leaves. Accumulates in chloroplasts of mature stomatal guard cells.

Its subcellular location is the plastid. It is found in the chloroplast. It localises to the chromoplast. The protein resides in the etioplast. The protein localises to the amyloplast. Functionally, required for the differentiation of chloroplast from proplastids or etioplasts, probably by modulating some chloroplast-encoded genes expression and mRNA maturation. Involved in leaf-cells differentiation. The polypeptide is Protein PALE CRESS, chloroplastic (PAC) (Arabidopsis thaliana (Mouse-ear cress)).